The sequence spans 844 residues: Leucine--tRNA ligase (844 aa).

The 'HIGH' region motif lies at 39 to 49; sequence PYPSGRIHMGH. The short motif at 621–625 is the 'KMSKS' region element; it reads KMSKS. K624 contacts ATP.

It belongs to the class-I aminoacyl-tRNA synthetase family.

Its subcellular location is the cytoplasm. The catalysed reaction is tRNA(Leu) + L-leucine + ATP = L-leucyl-tRNA(Leu) + AMP + diphosphate. The sequence is that of Leucine--tRNA ligase from Paracoccus denitrificans (strain Pd 1222).